A 149-amino-acid chain; its full sequence is MQIILLEKVANLGQLGDVVKVKDGYARNFLIPSGKAKRATEANLQAFEARRAELEAKQAEILVDAQARGEKLNGVTITIAQKAGVDGRLFGSITNADIAEAIIASGVQVQKSDVRLPNGPFKAIGEYNVEVALHHDVVVEIQLVVNAEA.

The protein belongs to the bacterial ribosomal protein bL9 family.

Functionally, binds to the 23S rRNA. This is Large ribosomal subunit protein bL9 from Laribacter hongkongensis (strain HLHK9).